The chain runs to 511 residues: Exodeoxyribonuclease 7 large subunit (511 aa).

This sequence belongs to the XseA family. As to quaternary structure, heterooligomer composed of large and small subunits.

It localises to the cytoplasm. It catalyses the reaction Exonucleolytic cleavage in either 5'- to 3'- or 3'- to 5'-direction to yield nucleoside 5'-phosphates.. In terms of biological role, bidirectionally degrades single-stranded DNA into large acid-insoluble oligonucleotides, which are then degraded further into small acid-soluble oligonucleotides. This is Exodeoxyribonuclease 7 large subunit from Brucella ovis (strain ATCC 25840 / 63/290 / NCTC 10512).